A 102-amino-acid chain; its full sequence is Large ribosomal subunit protein mL63 (102 aa).

The protein belongs to the mitochondrion-specific ribosomal protein mL63 family. Component of the mitochondrial large ribosomal subunit (mt-LSU). Mature mammalian 55S mitochondrial ribosomes consist of a small (28S) and a large (39S) subunit. The 28S small subunit contains a 12S ribosomal RNA (12S mt-rRNA) and 30 different proteins. The 39S large subunit contains a 16S rRNA (16S mt-rRNA), a copy of mitochondrial valine transfer RNA (mt-tRNA(Val)), which plays an integral structural role, and 52 different proteins.

Its subcellular location is the mitochondrion. This Homo sapiens (Human) protein is Large ribosomal subunit protein mL63 (MRPL57).